Reading from the N-terminus, the 386-residue chain is Ribonuclease D (386 aa).

The 3'-5' exonuclease domain maps to 3 to 174 (HTITTTDELA…EIYEYLSAEL (172 aa)). The 82-residue stretch at 213 to 294 (SGRVVAIAQQ…ARGMSVPNSE (82 aa)) folds into the HRDC domain.

It belongs to the RNase D family. It depends on a divalent metal cation as a cofactor.

It is found in the cytoplasm. The catalysed reaction is Exonucleolytic cleavage that removes extra residues from the 3'-terminus of tRNA to produce 5'-mononucleotides.. Its function is as follows. Exonuclease involved in the 3' processing of various precursor tRNAs. Initiates hydrolysis at the 3'-terminus of an RNA molecule and releases 5'-mononucleotides. This is Ribonuclease D from Jannaschia sp. (strain CCS1).